The sequence spans 613 residues: Leucine aminopeptidase 2 (613 aa).

A peptide contacts are provided by residues 134–136 (QAQ) and 265–270 (PYGGME). His294 is a binding site for Zn(2+). Glu295 functions as the Proton acceptor in the catalytic mechanism. Positions 298 and 317 each coordinate Zn(2+). Tyr382 serves as the catalytic Proton donor.

Belongs to the peptidase M1 family. It depends on Zn(2+) as a cofactor.

It is found in the cytoplasm. The protein localises to the nucleus. The catalysed reaction is an epoxide + H2O = an ethanediol. Its function is as follows. Aminopeptidase that preferentially cleaves di- and tripeptides. Also has low epoxide hydrolase activity (in vitro). Can hydrolyze the epoxide leukotriene LTA(4) but it forms preferentially 5,6-dihydroxy-7,9,11,14-eicosatetraenoic acid rather than the cytokine leukotriene B(4) as the product compared to the homologous mammalian enzyme (in vitro). In Pyricularia oryzae (strain 70-15 / ATCC MYA-4617 / FGSC 8958) (Rice blast fungus), this protein is Leucine aminopeptidase 2.